The primary structure comprises 78 residues: Small acidic protein 2 (78 aa).

In terms of tissue distribution, expressed in siliques and anthers.

Mediates responses to the synthetic auxin 2,4-dichlorophenoxyacetic acid (2,4-D). Not involved in the response to indole-3-acetic acid (IAA). May interact with RUB modification-related components and may regulate the culling-ring ubiquitin E3 ligase complex (CRL) activity. In Arabidopsis thaliana (Mouse-ear cress), this protein is Small acidic protein 2 (SMAP2).